Here is a 549-residue protein sequence, read N- to C-terminus: Neurofilament light polypeptide (549 aa).

N-acetylserine is present on Ser-2. The head stretch occupies residues 2-92 (SSFYSEPYYS…KSIRTQEKAQ (91 aa)). A glycan (O-linked (GlcNAc) threonine) is linked at Thr-21. At Arg-23 the chain carries Asymmetric dimethylarginine; alternate. Omega-N-methylarginine; alternate is present on Arg-23. O-linked (GlcNAc) serine glycosylation is present at Ser-27. Arg-30 carries the omega-N-methylarginine modification. Residue Tyr-43 is modified to Phosphotyrosine. Ser-56, Ser-66, and Ser-102 each carry phosphoserine. Positions 89-400 (EKAQLQDLND…KLLEGEETRL (312 aa)) constitute an IF rod domain. Positions 93 to 124 (LQDLNDRFASFIERVHELEQQNKVLEAQLLVL) are coil 1A. The linker 1 stretch occupies residues 125 to 137 (RQKHSEPSRFRAL). A coil 1B region spans residues 138-233 (YEQEIRDLRL…KVHEEEIAEL (96 aa)). The segment at 234-252 (QAQIQYAQISVEMDVSSKP) is linker 12. The segment at 253–271 (DLSAALKDIRAQYEKLAAK) is coil 2A. Residues 272–280 (NMQNAEEWF) form a linker 2 region. Residues 281–396 (KSRFTVLTES…AAYRKLLEGE (116 aa)) form a coil 2B region. The interval 381 to 391 (ALDIEIAAYRK) is epitope; recognized by IF-specific monoclonal antibody. The tail, subdomain A stretch occupies residues 397–443 (ETRLSFTSVGSLTTGYSQSSQVFGRSAYGGLQTSSYLMSTRSFPSYY). The interval 397–549 (ETRLSFTSVG…GEEQATKKKD (153 aa)) is tail. The tract at residues 444 to 549 (TSHVQEEQIE…GEEQATKKKD (106 aa)) is tail, subdomain B (acidic). The interval 462-549 (KAEEAKDEPP…GEEQATKKKD (88 aa)) is disordered. Residues 471-534 (PSEGEAEEEG…ETKEAEEEEK (64 aa)) are compositionally biased toward acidic residues. The residue at position 472 (Ser-472) is a Phosphoserine. At Thr-526 the chain carries Phosphothreonine. The segment covering 535-549 (KDEGAGEEQATKKKD) has biased composition (basic and acidic residues).

Belongs to the intermediate filament family. In terms of assembly, forms homodimers (in vitro). Forms heterodimers with NEFH or NEFM; which can further hetero-oligomerize (in vitro). Forms heterodimers with INA (in vitro). Interacts with ARHGEF28. Interacts with TRIM2. Post-translationally, O-glycosylated. Phosphorylated in the head and rod regions by the PKC kinase PKN1, leading to the inhibition of polymerization. In terms of processing, ubiquitinated in the presence of TRIM2 and UBE2D1.

It localises to the cell projection. Its subcellular location is the axon. The protein localises to the cytoplasm. It is found in the cytoskeleton. Neurofilaments usually contain three intermediate filament proteins: NEFL, NEFM, and NEFH which are involved in the maintenance of neuronal caliber. May additionally cooperate with the neuronal intermediate filament proteins PRPH and INA to form neuronal filamentous networks. The chain is Neurofilament light polypeptide (NEFL) from Sus scrofa (Pig).